The chain runs to 413 residues: Serine/threonine-protein kinase SSN3 (413 aa).

The Protein kinase domain occupies 26 to 355 (YHIVGFISSG…AQEALEHPYF (330 aa)). Residues 32 to 40 (ISSGTYGRV) and Lys-56 each bind ATP. Residue Asp-158 is the Proton acceptor of the active site. The span at 376–385 (RRVTQDDNDI) shows a compositional bias: basic and acidic residues. The disordered stretch occupies residues 376–413 (RRVTQDDNDIRSGSLPGTKRSGLPDDSLMGRASKRLKE).

The protein belongs to the protein kinase superfamily. CMGC Ser/Thr protein kinase family. CDC2/CDKX subfamily. As to quaternary structure, component of the srb8-11 complex, a regulatory module of the Mediator complex. Requires Mg(2+) as cofactor.

It is found in the nucleus. The catalysed reaction is L-seryl-[protein] + ATP = O-phospho-L-seryl-[protein] + ADP + H(+). It carries out the reaction L-threonyl-[protein] + ATP = O-phospho-L-threonyl-[protein] + ADP + H(+). It catalyses the reaction [DNA-directed RNA polymerase] + ATP = phospho-[DNA-directed RNA polymerase] + ADP + H(+). Its function is as follows. Component of the srb8-11 complex. The srb8-11 complex is a regulatory module of the Mediator complex which is itself involved in regulation of basal and activated RNA polymerase II-dependent transcription. The srb8-11 complex may be involved in the transcriptional repression of a subset of genes regulated by Mediator. It may inhibit the association of the Mediator complex with RNA polymerase II to form the holoenzyme complex. The srb8-11 complex phosphorylates the C-terminal domain (CTD) of the largest subunit of RNA polymerase II. The protein is Serine/threonine-protein kinase SSN3 (ssn3) of Aspergillus oryzae (strain ATCC 42149 / RIB 40) (Yellow koji mold).